We begin with the raw amino-acid sequence, 587 residues long: MSQMSITSQVIYDLVGLGFGPSNVAIAGALVDKWASPNSDAKSRSFQNVLFIEKHTSFQWHPGMLIPGAQMQISFLKDLATLRSPQSPITFLNYLHSQNRLASFINRGSTTPSRKEYADYLGWAARYVQDHGVKVNYGQEVIAIDEDADGLIGITSKDVTTNEIYTYKTRNLVISPGGSPRIPLTIAPLMNEPSVINDSTVLHSSAYLTSVDRLFQSLTRSSSSRRPFKIAVVGGGQSAAEVSLNLRERLSSIAFEGSVGHQVDMIIGRGSLKPSDDTPFSNEVFDPMTTDTWFGSSQHNRDRMITEYKPTNYSVVNPRTINAVRHVSPSLIYDQKVDDAIAARTLEDKTSGTSPARINIRANMRIVSLKYDDKNSTDSSSSPTTKSSSAFTLTLQNTHTPHTLHASAYDAIICATGYQRTGWIDMFKRSKRLGKHFGIGAEGAARVKLVPLDKRQRVDVDTLFDETAISSDVSSTASSSLYSVSGSDNSAASGVSGASTPLTSPSEEEGKSDVNLYISRRYRLLPVSTSSYEKTKTRDDDASEGVKMKARIYVQGVEEMTHGLSDTLLSVIGPRAGEVVEDLFAEE.

Residues 53–61 and glutamine 72 each bind FAD; that span reads EKHTSFQWH. Lysine 77 serves as a coordination point for substrate. 235-238 provides a ligand contact to NADP(+); sequence GGQS. Residues 282 to 285 and asparagine 312 each bind substrate; that span reads NEVF. NADP(+) is bound at residue 312 to 314; sequence NYS. Residues 488–511 are disordered; that stretch reads DNSAASGVSGASTPLTSPSEEEGK. Over residues 491–505 the composition is skewed to polar residues; sequence AASGVSGASTPLTSP. 567–569 provides a ligand contact to FAD; it reads TLL. A substrate-binding site is contributed by serine 570.

Belongs to the lysine N(6)-hydroxylase/L-ornithine N(5)-oxygenase family. As to quaternary structure, homotetramer. It depends on FAD as a cofactor.

The enzyme catalyses L-ornithine + NADPH + O2 = N(5)-hydroxy-L-ornithine + NADP(+) + H2O. It catalyses the reaction L-ornithine + NADH + O2 = N(5)-hydroxy-L-ornithine + NAD(+) + H2O. It functions in the pathway siderophore biosynthesis; ferrichrome biosynthesis. Its function is as follows. L-ornithine N(5)-monooxygenase; part of the siderophore biosynthetic pathway. Omphalotus olearius produces ferrichrome A, but no other siderophore has been detected. Ferrichrome A consists of a hexapeptide ring made up of one glycine, two serine, and three N(5)-hydroxyornithine amino acid residues, the latter acylated by trans-(alpha-methyl)-glutaconic acid residues. The biosynthesis of ferrichrome A depends on the hydroxylation of ornithine to N(5)-hydroxyornithine, catalyzed by the monooxygenase omo1. The second step, the acylation of N(5)-hydroxy-L-ornithine is probably catalyzed by the N-acyltransferase ato1. Finally, assembly of ferrichrome A is catalyzed by the nonribosomal peptide synthase (NRPS) fso1. This Omphalotus olearius (Jack o'lantern) protein is L-ornithine N(5)-monooxygenase.